The sequence spans 393 residues: Methyltransferase-like protein 22 (393 aa).

The segment at 54 to 87 is disordered; it reads WTDSGAEDSGPTDVSTEEMPPAGSGSGHSHEDLS. Ser120 carries the phosphoserine modification.

This sequence belongs to the methyltransferase superfamily. METTL22 family. As to quaternary structure, interacts with members of the heat shock protein 90 and 70 families; these proteins probably are methylation substrates.

It is found in the nucleus. It catalyses the reaction L-lysyl-[protein] + 3 S-adenosyl-L-methionine = N(6),N(6),N(6)-trimethyl-L-lysyl-[protein] + 3 S-adenosyl-L-homocysteine + 3 H(+). Functionally, protein N-lysine methyltransferase. Trimethylates KIN at Lys-135 (in vitro). The chain is Methyltransferase-like protein 22 (Mettl22) from Mus musculus (Mouse).